A 248-amino-acid polypeptide reads, in one-letter code: 2,3-bisphosphoglycerate-dependent phosphoglycerate mutase (248 aa).

Residues 8–15 (RHGESGWN) and arginine 58 contribute to the substrate site. The active-site Tele-phosphohistidine intermediate is histidine 9. Positions 82-101 (GTGEDRTEREDGSRKDRKEK) are disordered. Glutamate 124 (proton donor/acceptor) is an active-site residue. Substrate-binding positions include 124–127 (ERYY) and lysine 135.

The protein belongs to the phosphoglycerate mutase family. BPG-dependent PGAM subfamily.

It carries out the reaction (2R)-2-phosphoglycerate = (2R)-3-phosphoglycerate. Its pathway is carbohydrate degradation; glycolysis; pyruvate from D-glyceraldehyde 3-phosphate: step 3/5. Its function is as follows. Catalyzes the interconversion of 2-phosphoglycerate and 3-phosphoglycerate. This Methanosarcina acetivorans (strain ATCC 35395 / DSM 2834 / JCM 12185 / C2A) protein is 2,3-bisphosphoglycerate-dependent phosphoglycerate mutase.